Here is a 493-residue protein sequence, read N- to C-terminus: Galactose-1-phosphate uridylyltransferase (493 aa).

The protein belongs to the galactose-1-phosphate uridylyltransferase type 2 family.

The protein resides in the cytoplasm. It catalyses the reaction alpha-D-galactose 1-phosphate + UDP-alpha-D-glucose = alpha-D-glucose 1-phosphate + UDP-alpha-D-galactose. It functions in the pathway carbohydrate metabolism; galactose metabolism. This chain is Galactose-1-phosphate uridylyltransferase (galT), found in Streptococcus thermophilus.